Reading from the N-terminus, the 128-residue chain is ADA histone acetyltransferase complex component 2 (128 aa).

Its subcellular location is the cytoplasm. It is found in the nucleus. The sequence is that of ADA histone acetyltransferase complex component 2 (AHC2) from Saccharomyces cerevisiae (strain ATCC 204508 / S288c) (Baker's yeast).